Consider the following 282-residue polypeptide: Shikimate dehydrogenase (NADP(+)) (282 aa).

Shikimate-binding positions include 24-26 (SRS) and Thr71. Lys75 functions as the Proton acceptor in the catalytic mechanism. Asp87 lines the NADP(+) pocket. Shikimate-binding residues include Asn96 and Asp112. NADP(+)-binding positions include 138–142 (GAGGA), 162–167 (NRTRIR), and Leu227. Position 229 (Tyr229) interacts with shikimate. Gly250 lines the NADP(+) pocket.

Belongs to the shikimate dehydrogenase family. As to quaternary structure, homodimer.

The catalysed reaction is shikimate + NADP(+) = 3-dehydroshikimate + NADPH + H(+). Its pathway is metabolic intermediate biosynthesis; chorismate biosynthesis; chorismate from D-erythrose 4-phosphate and phosphoenolpyruvate: step 4/7. Functionally, involved in the biosynthesis of the chorismate, which leads to the biosynthesis of aromatic amino acids. Catalyzes the reversible NADPH linked reduction of 3-dehydroshikimate (DHSA) to yield shikimate (SA). In Paracoccus denitrificans (strain Pd 1222), this protein is Shikimate dehydrogenase (NADP(+)).